The sequence spans 288 residues: Nucleotide-binding protein Mlg_2233 (288 aa).

11 to 18 is an ATP binding site; the sequence is GLSGSGKS. 63–66 contributes to the GTP binding site; it reads DARN.

The protein belongs to the RapZ-like family.

Its function is as follows. Displays ATPase and GTPase activities. The protein is Nucleotide-binding protein Mlg_2233 of Alkalilimnicola ehrlichii (strain ATCC BAA-1101 / DSM 17681 / MLHE-1).